The sequence spans 397 residues: Subtilisin-like protease 3 (397 aa).

The first 19 residues, 1 to 19 (MGCIKVISVFLAAIAAVDA), serve as a signal peptide directing secretion. Residues 20–116 (RAFFHNRGGS…VEHDRVVKLA (97 aa)) constitute a propeptide that is removed on maturation. Positions 35-116 (SYIVVMKDGV…VEHDRVVKLA (82 aa)) constitute an Inhibitor I9 domain. Residues 126-397 (TWGLGRVSHR…NRLLYNGSGQ (272 aa)) form the Peptidase S8 domain. Residues D158 and H189 each act as charge relay system in the active site. N-linked (GlcNAc...) asparagine glycosylation is present at N250. The active-site Charge relay system is S344. N393 is a glycosylation site (N-linked (GlcNAc...) asparagine).

The protein belongs to the peptidase S8 family.

The protein localises to the secreted. Its function is as follows. Secreted subtilisin-like serine protease with keratinolytic activity that contributes to pathogenicity. The chain is Subtilisin-like protease 3 (SUB3) from Trichophyton tonsurans (Scalp ringworm fungus).